The sequence spans 464 residues: Siroheme synthase (464 aa).

Residues 1–203 are precorrin-2 dehydrogenase /sirohydrochlorin ferrochelatase; that stretch reads MKYLPLFHNL…GQGAEAERLL (203 aa). NAD(+) is bound by residues 22–23 and 43–44; these read EI and PE. The residue at position 128 (S128) is a Phosphoserine. The interval 216–464 is uroporphyrinogen-III C-methyltransferase; the sequence is GEVYLVGAGP…AWFEGAQGQI (249 aa). Residue P225 participates in S-adenosyl-L-methionine binding. D248 acts as the Proton acceptor in catalysis. The active-site Proton donor is the K270. Residues 301–303, I306, 331–332, M383, and G412 each bind S-adenosyl-L-methionine; these read GGD and TA.

The protein in the N-terminal section; belongs to the precorrin-2 dehydrogenase / sirohydrochlorin ferrochelatase family. In the C-terminal section; belongs to the precorrin methyltransferase family.

The catalysed reaction is uroporphyrinogen III + 2 S-adenosyl-L-methionine = precorrin-2 + 2 S-adenosyl-L-homocysteine + H(+). The enzyme catalyses precorrin-2 + NAD(+) = sirohydrochlorin + NADH + 2 H(+). It catalyses the reaction siroheme + 2 H(+) = sirohydrochlorin + Fe(2+). It participates in cofactor biosynthesis; adenosylcobalamin biosynthesis; precorrin-2 from uroporphyrinogen III: step 1/1. It functions in the pathway cofactor biosynthesis; adenosylcobalamin biosynthesis; sirohydrochlorin from precorrin-2: step 1/1. The protein operates within porphyrin-containing compound metabolism; siroheme biosynthesis; precorrin-2 from uroporphyrinogen III: step 1/1. Its pathway is porphyrin-containing compound metabolism; siroheme biosynthesis; siroheme from sirohydrochlorin: step 1/1. It participates in porphyrin-containing compound metabolism; siroheme biosynthesis; sirohydrochlorin from precorrin-2: step 1/1. Functionally, multifunctional enzyme that catalyzes the SAM-dependent methylations of uroporphyrinogen III at position C-2 and C-7 to form precorrin-2 via precorrin-1. Then it catalyzes the NAD-dependent ring dehydrogenation of precorrin-2 to yield sirohydrochlorin. Finally, it catalyzes the ferrochelation of sirohydrochlorin to yield siroheme. The chain is Siroheme synthase from Pseudomonas fluorescens (strain Pf0-1).